A 257-amino-acid polypeptide reads, in one-letter code: Imidazole glycerol phosphate synthase subunit HisF (257 aa).

Catalysis depends on residues aspartate 12 and aspartate 131.

It belongs to the HisA/HisF family. In terms of assembly, heterodimer of HisH and HisF.

It is found in the cytoplasm. It catalyses the reaction 5-[(5-phospho-1-deoxy-D-ribulos-1-ylimino)methylamino]-1-(5-phospho-beta-D-ribosyl)imidazole-4-carboxamide + L-glutamine = D-erythro-1-(imidazol-4-yl)glycerol 3-phosphate + 5-amino-1-(5-phospho-beta-D-ribosyl)imidazole-4-carboxamide + L-glutamate + H(+). It participates in amino-acid biosynthesis; L-histidine biosynthesis; L-histidine from 5-phospho-alpha-D-ribose 1-diphosphate: step 5/9. Its function is as follows. IGPS catalyzes the conversion of PRFAR and glutamine to IGP, AICAR and glutamate. The HisF subunit catalyzes the cyclization activity that produces IGP and AICAR from PRFAR using the ammonia provided by the HisH subunit. The protein is Imidazole glycerol phosphate synthase subunit HisF of Burkholderia multivorans (strain ATCC 17616 / 249).